A 3726-amino-acid polypeptide reads, in one-letter code: Histone-lysine N-methyltransferase trithorax (3726 aa).

Disordered regions lie at residues 1-247 (MGRS…ATTS), 321-352 (QLNSPVVDNPSPSPPIASGSTPSVEGGIGVGG), 371-429 (NEVA…TAKQ), and 509-624 (AGAS…RSTR). Low complexity-rich tracts occupy residues 31–53 (PAEPQQPAPESQQPSGSGSGSSA) and 71–101 (GGASISGNTASSSAGSGNSGNGSSSGSSTGS). Positions 102–115 (GSSGSGSTNGGSVN) are enriched in gly residues. Basic and acidic residues predominate over residues 126 to 143 (LDKEAVTKDQNGDGDKTR). Over residues 147 to 205 (SSAPSGKLSAAASGKALSKSSRTFSASTSVTSSGRSSGSSPDGNSGASSDGASSGISCG) the composition is skewed to low complexity. Over residues 206–215 (KSTAKSTEAS) the composition is skewed to polar residues. Over residues 222–247 (TTGAGTCSSAKSSKASSGTTSEATTS) the composition is skewed to low complexity. 2 stretches are compositionally biased toward low complexity: residues 384 to 402 (AAANGAASGKGSASNGPPA) and 509 to 525 (AGASSSSSNQESGSSSN). Acidic residues predominate over residues 553–586 (PEDQNNAEDDEMDDDDDDEEAEEDDENEDDNDEA). Residues 587-610 (VSEKSAETEKSAGADERDPDEKQL) are compositionally biased toward basic and acidic residues. A DNA-binding region (nuclear receptor) is located at residues 759 to 884 (PSACSICSAV…PGMRGEAAAR (126 aa)). Disordered stretches follow at residues 915 to 937 (TSVKWKSSGDSTSALTSIKPNPL), 981 to 1049 (LTKK…SHGV), 1115 to 1184 (VPSA…SSAK), and 1208 to 1231 (DIATSSSVTQSSNQTQGRKTKEHR). Residues 918–937 (KWKSSGDSTSALTSIKPNPL) are compositionally biased toward polar residues. Positions 986 to 1000 (SKQEKEKVKESEQSE) are enriched in basic and acidic residues. Residues 1031–1041 (PQTSTTTQPSA) are compositionally biased toward low complexity. Residues 1123 to 1132 (SPEKPTHIVT) are compositionally biased toward basic and acidic residues. Composition is skewed to low complexity over residues 1173–1183 (GTASAAGGSSA) and 1211–1223 (TSSSVTQSSNQTQ). PHD-type zinc fingers lie at residues 1266 to 1347 (RALC…CTVC), 1348 to 1393 (YTCN…CLKC), and 1421 to 1482 (GNFC…CARR). The 168-residue stretch at 1496–1663 (AVMEEFKASL…SEQFPWFQNE (168 aa)) folds into the Bromo domain. Residues 1573-1592 (FKDQQQQQQQRNANMNKPRV) are disordered. The C2HC pre-PHD-type zinc-finger motif lies at 1734 to 1774 (TRMCLFCRKSGEGLSGEEARLLYCGHDCWVHTNCAMWSAEV). The segment at 1795–1842 (IKCTVCGNRGATVGCNVRSCGEHYHYPCARSIDCAFLTDKSMYCPAHA) adopts a PHD-type 4 zinc-finger fold. In terms of domain architecture, FYR N-terminal spans 1884–1941 (RVQFHIGSLEVRQLGAIVPRFSDSYEAVVPINFLCSRLYWSSKEPWKIVEYTVRTTIQ). 7 disordered regions span residues 1991 to 2019 (GGTDWSGEFPNPNSCVPPDENTEEEPQQQ), 2068 to 2110 (TQAM…WPAS), 2283 to 2302 (CSPTMSSNETESDVSGQGMT), 2649 to 2669 (GGGADGNQPGSNQQPLILGGT), 2866 to 2894 (SNLKQSQVKGKAASGTGTTCGAPPSIASK), 3029 to 3096 (QHFS…PTPP), and 3347 to 3381 (RKEEQRTVSQEQEQSKAAIVPTAAAPEPPQPIQEP). Low complexity predominate over residues 2074–2087 (NQAQNQNQQAGGAN). A compositionally biased stretch (low complexity) spans 3032 to 3043 (STSSSSSSSNCS). Polar residues predominate over residues 3044-3057 (LPTNVVNPMQQQAP). The 85-residue stretch at 3386 to 3470 (GPHLLYEIQS…EKCSKYTPKY (85 aa)) folds into the FYR C-terminal domain. The SET domain occupies 3588 to 3704 (DYVGVFRSHI…QGEELTYDYK (117 aa)). His3598 and Arg3600 together coordinate S-adenosyl-L-methionine. An S-methylcysteine; by autocatalysis modification is found at Cys3641. Residues Tyr3642 and 3665-3666 (NH) each bind S-adenosyl-L-methionine. Cys3668, Cys3714, Cys3716, and Cys3721 together coordinate Zn(2+). Positions 3710 to 3726 (EKIPCSCGSKRCRKYLN) constitute a Post-SET domain.

It belongs to the class V-like SAM-binding methyltransferase superfamily. Histone-lysine methyltransferase family. TRX/MLL subfamily. As to quaternary structure, interacts (via SET domain) with ash1 (via SET domain). Interacts with Nup98. In terms of tissue distribution, maternal isoforms are expressed in syncytial blastoderm, confined to the ventral region fated to become mesoderm. An additional broad domain of expression arises during cellularization and is quickly resolved into four pair-rule-like stripes in the posterior half of the embryo.

Its subcellular location is the nucleus. The protein resides in the chromosome. The enzyme catalyses L-lysyl(9)-[histone H3] + 3 S-adenosyl-L-methionine = N(6),N(6),N(6)-trimethyl-L-lysyl(9)-[histone H3] + 3 S-adenosyl-L-homocysteine + 3 H(+). It carries out the reaction L-cysteinyl-[protein] + S-adenosyl-L-methionine = S-methyl-L-cysteinyl-[protein] + S-adenosyl-L-homocysteine + H(+). In terms of biological role, histone methyltransferase that methylates 'Lys-4' of histone H3 (H3K4me). H3K4me represents a specific tag for epigenetic transcriptional activation. Functions in segment determination through interaction with genes of bithorax (BX-C) and antennapedia (ANT-C) complexes. Acts as an activator of BX-C. Involved in the very early regulation of homeotic genes expressed only in the posterior region of the embryo. Also has auto-methylation activity on Cys-3641. The sequence is that of Histone-lysine N-methyltransferase trithorax from Drosophila melanogaster (Fruit fly).